Here is a 387-residue protein sequence, read N- to C-terminus: Phosphoglycerate kinase (387 aa).

Residues 21 to 23, R36, 59 to 62, R113, and R146 each bind substrate; these read DLN and HLGR. ATP is bound by residues K197, E314, and 340-343; that span reads GGDT.

It belongs to the phosphoglycerate kinase family. As to quaternary structure, monomer.

The protein localises to the cytoplasm. The enzyme catalyses (2R)-3-phosphoglycerate + ATP = (2R)-3-phospho-glyceroyl phosphate + ADP. It participates in carbohydrate degradation; glycolysis; pyruvate from D-glyceraldehyde 3-phosphate: step 2/5. The protein is Phosphoglycerate kinase of Photorhabdus laumondii subsp. laumondii (strain DSM 15139 / CIP 105565 / TT01) (Photorhabdus luminescens subsp. laumondii).